The chain runs to 447 residues: Acid phosphatase (447 aa).

Positions 1-17 are cleaved as a signal peptide; the sequence is MKPSVATLLATVSLVYA. Asparagine 119, asparagine 150, asparagine 177, asparagine 186, and asparagine 208 each carry an N-linked (GlcNAc...) asparagine glycan. Residue aspartate 215 is the Proton donor of the active site. Residues asparagine 217, asparagine 234, asparagine 240, asparagine 315, asparagine 332, asparagine 382, and asparagine 405 are each glycosylated (N-linked (GlcNAc...) asparagine). Serine 419 is lipidated: GPI-like-anchor amidated serine. Positions 420–447 are cleaved as a propeptide — removed in mature form; that stretch reads ASSNAAVSAVAPAAGVSGLLLGLALNLL.

The GPI-like anchor contains a phosphoceramide lipid group. The anchor position has not been determined.

The protein localises to the cell membrane. It carries out the reaction a phosphate monoester + H2O = an alcohol + phosphate. With respect to regulation, inhibited by NaF, molybdate and vanadate. In terms of biological role, has both phosphomonoesterase and phosphodiesterase activity. Cleaves a broad range of phosphate esters. This chain is Acid phosphatase (phoA), found in Aspergillus fumigatus (strain ATCC MYA-4609 / CBS 101355 / FGSC A1100 / Af293) (Neosartorya fumigata).